A 714-amino-acid chain; its full sequence is DNA ligase (714 aa).

Residues Asp59–Asp63, Ser108–Leu109, and Glu139 each bind NAD(+). The N6-AMP-lysine intermediate role is filled by Lys141. Residues Arg162, Glu200, Lys325, and Lys349 each contribute to the NAD(+) site. Residues Cys443, Cys446, Cys461, and Cys466 each contribute to the Zn(2+) site. Residues Val624–His713 form the BRCT domain.

The protein belongs to the NAD-dependent DNA ligase family. LigA subfamily. Requires Mg(2+) as cofactor. Mn(2+) is required as a cofactor.

The enzyme catalyses NAD(+) + (deoxyribonucleotide)n-3'-hydroxyl + 5'-phospho-(deoxyribonucleotide)m = (deoxyribonucleotide)n+m + AMP + beta-nicotinamide D-nucleotide.. DNA ligase that catalyzes the formation of phosphodiester linkages between 5'-phosphoryl and 3'-hydroxyl groups in double-stranded DNA using NAD as a coenzyme and as the energy source for the reaction. It is essential for DNA replication and repair of damaged DNA. The protein is DNA ligase of Persephonella marina (strain DSM 14350 / EX-H1).